Here is a 174-residue protein sequence, read N- to C-terminus: Beta-lactoglobulin (174 aa).

Residues 1–18 form the signal peptide; that stretch reads MKFLLLTVGLTSICAIQA. Intrachain disulfides connect C79-C172 and C122-C134.

The protein belongs to the calycin superfamily. Lipocalin family. In terms of assembly, monomer.

The protein localises to the secreted. Its function is as follows. Lactoglobulin is the primary component of whey, it binds retinol and is probably involved in the transport of that molecule. The protein is Beta-lactoglobulin (LGB) of Trichosurus vulpecula (Brush-tailed possum).